We begin with the raw amino-acid sequence, 291 residues long: N-acetylmannosamine kinase (291 aa).

Residues 5–12 (AIDIGGTK) and 132–139 (GVGGGVVS) each bind ATP. His-156, Cys-166, Cys-168, and Cys-173 together coordinate Zn(2+).

This sequence belongs to the ROK (NagC/XylR) family. NanK subfamily. In terms of assembly, homodimer.

The catalysed reaction is an N-acyl-D-mannosamine + ATP = an N-acyl-D-mannosamine 6-phosphate + ADP + H(+). It functions in the pathway amino-sugar metabolism; N-acetylneuraminate degradation; D-fructose 6-phosphate from N-acetylneuraminate: step 2/5. Catalyzes the phosphorylation of N-acetylmannosamine (ManNAc) to ManNAc-6-P. The protein is N-acetylmannosamine kinase of Escherichia coli (strain SMS-3-5 / SECEC).